Here is a 283-residue protein sequence, read N- to C-terminus: Pantothenate synthetase (283 aa).

26–33 (MGNLHEGH) is a binding site for ATP. Catalysis depends on His33, which acts as the Proton donor. Gln57 lines the (R)-pantoate pocket. Residue Gln57 participates in beta-alanine binding. 144 to 147 (GKKD) serves as a coordination point for ATP. Gln150 lines the (R)-pantoate pocket. ATP-binding positions include Val173 and 181–184 (LSSR).

This sequence belongs to the pantothenate synthetase family. Homodimer.

The protein localises to the cytoplasm. The catalysed reaction is (R)-pantoate + beta-alanine + ATP = (R)-pantothenate + AMP + diphosphate + H(+). Its pathway is cofactor biosynthesis; (R)-pantothenate biosynthesis; (R)-pantothenate from (R)-pantoate and beta-alanine: step 1/1. In terms of biological role, catalyzes the condensation of pantoate with beta-alanine in an ATP-dependent reaction via a pantoyl-adenylate intermediate. The chain is Pantothenate synthetase from Ralstonia nicotianae (strain ATCC BAA-1114 / GMI1000) (Ralstonia solanacearum).